Consider the following 233-residue polypeptide: Lipoprotein-releasing system ATP-binding protein LolD (233 aa).

The region spanning 9–233 (LAINAVSKVF…GILSQSETHR (225 aa)) is the ABC transporter domain. 45–52 (GSSGSGKS) lines the ATP pocket.

This sequence belongs to the ABC transporter superfamily. Lipoprotein translocase (TC 3.A.1.125) family. In terms of assembly, the complex is composed of two ATP-binding proteins (LolD) and two transmembrane proteins (LolC and LolE).

It is found in the cell inner membrane. Its function is as follows. Part of the ABC transporter complex LolCDE involved in the translocation of mature outer membrane-directed lipoproteins, from the inner membrane to the periplasmic chaperone, LolA. Responsible for the formation of the LolA-lipoprotein complex in an ATP-dependent manner. In Shewanella denitrificans (strain OS217 / ATCC BAA-1090 / DSM 15013), this protein is Lipoprotein-releasing system ATP-binding protein LolD.